Here is a 788-residue protein sequence, read N- to C-terminus: Elongator complex protein 2 (788 aa).

8 WD repeats span residues 13–51 (GANK…NKGV), 57–96 (GHEA…HLQC), 102–139 (HYSK…DEFG), 200–243 (GHED…LIDD), 279–318 (GHDD…GIWV), 336–377 (GSSG…ICDQ), 383–422 (GATK…ASGR), and 437–475 (IHGY…AGML). The interval 490–530 (PDSATVPVLGLSNKAGEDDANEDDEEEEGGNKETPDITDPL) is disordered. Position 492 is a phosphoserine (Ser-492). A compositionally biased stretch (acidic residues) spans 507–517 (DDANEDDEEEE). 5 WD repeats span residues 556–600 (GHGF…EIKP), 604–643 (FHSL…NTFE), 651–692 (PHTR…ADDY), 699–742 (KHTK…FELI), and 750–788 (TPAD…LAYE).

The protein belongs to the WD repeat ELP2 family. Component of the elongator complex which consists of ELP1/IKI3, ELP2, ELP3, ELP4, ELP5/IKI1 and ELP6. The elongator complex is composed of two copies of the Elp123 subcomplex (composed of ELP1/IKI3, ELP2 and ELP3) and two copies of the Elp456 subcomplex (composed of ELP4, ELP5/IKI1 and ELP6). The Elp123 subcomplex forms a two-lobed scaffold, which binds the Elp456 subcomplex asymmetrically. In the complex, ELP2 interacts with ELP1/IKI3. In each lobe, ELP2 is tightly sandwiched between ELP1/IKI3 and ELP3. The Elp123 subcomplex binds tRNA through ELP1/IKI3 and ELP3 and can bind 2 tRNAs simultaneously. tRNA-binding induces conformational rearrangements which precisely position the targeted anticodon base in the active site. The Elp456 subcomplex binds tRNA and has ATPase activity. Interacts with KTI11/DPH3.

Its subcellular location is the cytoplasm. It localises to the nucleus. The protein operates within tRNA modification; 5-methoxycarbonylmethyl-2-thiouridine-tRNA biosynthesis. In terms of biological role, component of the elongator complex, a multiprotein complex which is required for multiple tRNA modifications, including mcm5U (5-methoxycarbonylmethyl uridine), mcm5s2U (5-methoxycarbonylmethyl-2-thiouridine), and ncm5U (5-carbamoylmethyl uridine). The elongator complex catalyzes formation of carboxymethyluridine in the wobble base at position 34 in tRNAs. It functions as a gamma-toxin target (TOT); disruption of the complex confers resistance to Kluyveromyces lactis toxin zymocin (pGKL1 killer toxin). May also be involved in sensitivity to Pichia inositovora toxin. ELP2 binds to microtubules. Independently, ELP2 may be involved in polarized exocytosis. The sequence is that of Elongator complex protein 2 (ELP2) from Saccharomyces cerevisiae (strain ATCC 204508 / S288c) (Baker's yeast).